We begin with the raw amino-acid sequence, 715 residues long: Fatty acid oxidation complex subunit alpha (715 aa).

The enoyl-CoA hydratase stretch occupies residues 1–190; it reads MTTTSAFMLN…KAGLVDDVVP (190 aa). The segment at 306–715 is 3-hydroxyacyl-CoA dehydrogenase; the sequence is GPLNSVGILG…WTNGETDQGN (410 aa).

The protein in the N-terminal section; belongs to the enoyl-CoA hydratase/isomerase family. In the central section; belongs to the 3-hydroxyacyl-CoA dehydrogenase family. In terms of assembly, heterotetramer of two alpha chains (FadJ) and two beta chains (FadI).

It localises to the cytoplasm. It catalyses the reaction a (3S)-3-hydroxyacyl-CoA = a (2E)-enoyl-CoA + H2O. The catalysed reaction is a 4-saturated-(3S)-3-hydroxyacyl-CoA = a (3E)-enoyl-CoA + H2O. The enzyme catalyses a (3S)-3-hydroxyacyl-CoA + NAD(+) = a 3-oxoacyl-CoA + NADH + H(+). It carries out the reaction (3S)-3-hydroxybutanoyl-CoA = (3R)-3-hydroxybutanoyl-CoA. It participates in lipid metabolism; fatty acid beta-oxidation. In terms of biological role, catalyzes the formation of a hydroxyacyl-CoA by addition of water on enoyl-CoA. Also exhibits 3-hydroxyacyl-CoA epimerase and 3-hydroxyacyl-CoA dehydrogenase activities. The protein is Fatty acid oxidation complex subunit alpha of Salmonella dublin (strain CT_02021853).